Reading from the N-terminus, the 547-residue chain is CTP synthase (547 aa).

Positions 1 to 265 (MARYVFITGG…DQAVLDAFGI (265 aa)) are amidoligase domain. Position 13 (Ser13) interacts with CTP. Ser13 is a binding site for UTP. ATP-binding positions include 14-19 (SLGKGL) and Asp71. Asp71 and Glu139 together coordinate Mg(2+). Residues 146 to 148 (DIE), 186 to 191 (KTKPTQ), and Lys222 each bind CTP. UTP is bound by residues 186 to 191 (KTKPTQ) and Lys222. The Glutamine amidotransferase type-1 domain occupies 291–546 (RVAIVGKYTQ…IRAAVEVSRL (256 aa)). Gly353 is an L-glutamine binding site. The active-site Nucleophile; for glutamine hydrolysis is the Cys380. L-glutamine contacts are provided by residues 381 to 384 (LGMQ), Glu404, and Arg474. Active-site residues include His519 and Glu521.

Belongs to the CTP synthase family. In terms of assembly, homotetramer.

The catalysed reaction is UTP + L-glutamine + ATP + H2O = CTP + L-glutamate + ADP + phosphate + 2 H(+). It catalyses the reaction L-glutamine + H2O = L-glutamate + NH4(+). The enzyme catalyses UTP + NH4(+) + ATP = CTP + ADP + phosphate + 2 H(+). It functions in the pathway pyrimidine metabolism; CTP biosynthesis via de novo pathway; CTP from UDP: step 2/2. With respect to regulation, allosterically activated by GTP, when glutamine is the substrate; GTP has no effect on the reaction when ammonia is the substrate. The allosteric effector GTP functions by stabilizing the protein conformation that binds the tetrahedral intermediate(s) formed during glutamine hydrolysis. Inhibited by the product CTP, via allosteric rather than competitive inhibition. Functionally, catalyzes the ATP-dependent amination of UTP to CTP with either L-glutamine or ammonia as the source of nitrogen. Regulates intracellular CTP levels through interactions with the four ribonucleotide triphosphates. In Cereibacter sphaeroides (strain ATCC 17025 / ATH 2.4.3) (Rhodobacter sphaeroides), this protein is CTP synthase.